The following is a 404-amino-acid chain: Acetylornithine aminotransferase (404 aa).

Pyridoxal 5'-phosphate is bound by residues 113-114 and phenylalanine 139; that span reads GT. Arginine 142 provides a ligand contact to N(2)-acetyl-L-ornithine. 224 to 227 lines the pyridoxal 5'-phosphate pocket; the sequence is DEVQ. Lysine 253 carries the post-translational modification N6-(pyridoxal phosphate)lysine. Serine 281 is a N(2)-acetyl-L-ornithine binding site. Threonine 282 serves as a coordination point for pyridoxal 5'-phosphate.

It belongs to the class-III pyridoxal-phosphate-dependent aminotransferase family. ArgD subfamily. Homodimer. Pyridoxal 5'-phosphate serves as cofactor.

The protein localises to the cytoplasm. The catalysed reaction is N(2)-acetyl-L-ornithine + 2-oxoglutarate = N-acetyl-L-glutamate 5-semialdehyde + L-glutamate. The protein operates within amino-acid biosynthesis; L-arginine biosynthesis; N(2)-acetyl-L-ornithine from L-glutamate: step 4/4. This is Acetylornithine aminotransferase from Mycobacterium leprae (strain TN).